We begin with the raw amino-acid sequence, 207 residues long: Superoxide dismutase [Mn] (207 aa).

H28, H76, D160, and H164 together coordinate Mn(2+).

It belongs to the iron/manganese superoxide dismutase family. It depends on Mn(2+) as a cofactor.

The enzyme catalyses 2 superoxide + 2 H(+) = H2O2 + O2. Its function is as follows. Destroys superoxide anion radicals which are normally produced within the cells and which are toxic to biological systems. This chain is Superoxide dismutase [Mn] (sodA), found in Mycobacterium avium.